The sequence spans 1222 residues: Protein SCP160 (1222 aa).

Positions 1–12 (MSEEQTAIDSPP) are enriched in polar residues. The tract at residues 1–59 (MSEEQTAIDSPPSTVEGSVETVTTIDSPSTTASTIAATAEEHPQLEKKPTPLPSLKDLP) is disordered. Residues 13–38 (STVEGSVETVTTIDSPSTTASTIAAT) show a composition bias toward low complexity. The segment covering 39–49 (AEEHPQLEKKP) has biased composition (basic and acidic residues). The residue at position 50 (T50) is a Phosphothreonine. 5 positions are modified to phosphoserine: S54, S63, S85, S87, and S89. Residues 79–98 (KPAVSNSPSPSPSAPSLTTG) are disordered. The KH 1 domain maps to 177-249 (PINAVIEVPS…ESVNLAKAKI (73 aa)). S630 is modified (phosphoserine). 5 KH domains span residues 634-702 (KSKM…KKYL), 712-771 (IITK…HEEL), 782-851 (GHKM…AKRV), 861-929 (FVTE…VEEI), and 939-1001 (SVTK…EKKI). S1112 is modified (phosphoserine). One can recognise a KH 7 domain in the interval 1153 to 1216 (YAGYVWGADT…AGVEKAGEMV (64 aa)).

The protein localises to the endoplasmic reticulum membrane. The protein resides in the nucleus membrane. In terms of biological role, involved in the control of mitotic chromosome transmission. Required during cell division for faithful partitioning of the ER-nuclear envelope membranes which, in S.cerevisiae, enclose the duplicated chromosomes. In Saccharomyces cerevisiae (strain ATCC 204508 / S288c) (Baker's yeast), this protein is Protein SCP160 (SCP160).